The sequence spans 291 residues: ATP synthase gamma chain (291 aa).

Belongs to the ATPase gamma chain family. F-type ATPases have 2 components, CF(1) - the catalytic core - and CF(0) - the membrane proton channel. CF(1) has five subunits: alpha(3), beta(3), gamma(1), delta(1), epsilon(1). CF(0) has three main subunits: a, b and c.

The protein resides in the cell membrane. Functionally, produces ATP from ADP in the presence of a proton gradient across the membrane. The gamma chain is believed to be important in regulating ATPase activity and the flow of protons through the CF(0) complex. The protein is ATP synthase gamma chain of Streptococcus equi subsp. zooepidemicus (strain MGCS10565).